The primary structure comprises 395 residues: F-box/kelch-repeat protein At4g39570 (395 aa).

The segment covering 1 to 25 has biased composition (basic residues); that stretch reads MSSPERKRKRVTSTKNPSVKKKKKI. The disordered stretch occupies residues 1–29; that stretch reads MSSPERKRKRVTSTKNPSVKKKKKISPVP. Residues 29-75 form the F-box domain; the sequence is PTPIPSLPDDLLVSIFARVSRLYYPILSLVSKSFRSLLRSPELYETR. 2 Kelch repeats span residues 150-197 and 198-246; these read DIYF…VIDG and KIYV…RSAY.

This is F-box/kelch-repeat protein At4g39570 from Arabidopsis thaliana (Mouse-ear cress).